The primary structure comprises 25 residues: LFHYCQCQCPPGFKGKFCQFKLRPP.

In terms of processing, contains 2 disulfide bonds. However, cysteine pairing is not critical for peptide binding to melanocortin receptors, since peptides with different pairings have similar potency at the receptors tested. In terms of tissue distribution, expressed by the venom duct.

It localises to the secreted. Peptide with nanomolar affinity for human melanocortin receptors. The natural disulfide pairing being unknown, the activity of all three possible peptides (with the cysteine pairings 'bead (I-II, III-IV), 'globular' (I-III, II-IV), and 'ribbon' (I-IV, II-III)) have been tested. All three isomers show similar affinities on each human melanocortin subtype (MC1R (~500 nM), MC3R (~100 nM), MC4R (~50 nM), and MC5R (~50 nM)). In Conus litoglyphus (Lithograph cone), this protein is NU-conotoxin-Ltg1a.